A 184-amino-acid chain; its full sequence is Tumor necrosis factor alpha-induced protein 8-like protein 2 (184 aa).

S3 is subject to Phosphoserine.

It belongs to the TNFAIP8 family. TNFAIP8L2 subfamily. As to quaternary structure, may interact with CASP8; however, such result is unclear since could not reproduce the interaction with CASP8. Interacts with RAC1. In terms of processing, phosphorylated by TAK1/MAP3K7; this phosphorylation triggers association with BTRC and subsequent ubiquitination and degradation. Post-translationally, ubiquitinated in a BTRC-depdent manner; leading to degradation mediated through the proteasome pathway.

The protein resides in the cytoplasm. Its subcellular location is the nucleus. The protein localises to the lysosome. Functionally, acts as a negative regulator of innate and adaptive immunity by maintaining immune homeostasis. Plays a regulatory role in the Toll-like signaling pathway by determining the strength of LPS-induced signaling and gene expression. Inhibits TCR-mediated T-cell activation and negatively regulate T-cell function to prevent hyperresponsiveness. Also inhibits autolysosome formation via negatively modulating MTOR activation by interacting with RAC1 and promoting the disassociation of the RAC1-MTOR complex. Plays an essential role in NK-cell biology by acting as a checkpoint and displaying an expression pattern correlating with NK-cell maturation process and by negatively regulating NK-cell maturation and antitumor immunity. Mechanistically, suppresses IL-15-triggered mTOR activity in NK-cells. The protein is Tumor necrosis factor alpha-induced protein 8-like protein 2 (Tnfaip8l2) of Rattus norvegicus (Rat).